Here is a 360-residue protein sequence, read N- to C-terminus: Protein pelota homolog (360 aa).

This sequence belongs to the eukaryotic release factor 1 family. Pelota subfamily. In terms of assembly, monomer. Requires a divalent metal cation as cofactor.

The protein resides in the cytoplasm. Functionally, may function in recognizing stalled ribosomes, interact with stem-loop structures in stalled mRNA molecules, and effect endonucleolytic cleavage of the mRNA. May play a role in the release non-functional ribosomes and degradation of damaged mRNAs. Has endoribonuclease activity. This chain is Protein pelota homolog, found in Hyperthermus butylicus (strain DSM 5456 / JCM 9403 / PLM1-5).